The chain runs to 170 residues: Translationally-controlled tumor protein homolog (170 aa).

Residues 1–170 (MIIYKDLLSG…FKDGLEIEKC (170 aa)) form the TCTP domain.

The protein belongs to the TCTP family.

The protein resides in the cytoplasm. Functionally, involved in calcium binding and microtubule stabilization. This is Translationally-controlled tumor protein homolog (tpt1) from Scophthalmus maximus (Turbot).